Consider the following 419-residue polypeptide: Dimethylallyltryptophan synthase 1 (419 aa).

L-tryptophan is bound by residues F81, M82, and E90. Residue F81 coordinates L-tyrosine. Residues R105, K187, Y189, R251, K253, and Y255 each coordinate (2E)-geranyl diphosphate. Dimethylallyl diphosphate-binding residues include R105, K187, Y189, R251, K253, and Y255. An L-tryptophan-binding site is contributed by R257. R257 contacts L-tyrosine. 2 residues coordinate (2E)-geranyl diphosphate: K332 and Y334. Residues K332 and Y334 each coordinate dimethylallyl diphosphate. Y389 is an L-tryptophan binding site. Residue Y389 participates in L-tyrosine binding. Y404 is a (2E)-geranyl diphosphate binding site.

Belongs to the tryptophan dimethylallyltransferase family.

The catalysed reaction is L-tyrosine + dimethylallyl diphosphate = 4-O-dimethylallyl-L-tyrosine + diphosphate. In terms of biological role, dimethylallyltryptophan synthase; part of the DMATS1 gene cluster that mediates the biosynthesis of a reversely N-prenylated monomeric L-tryptophan (r-N-DMAT). DMATS1 catalyzes the reverse N-prenylation of L-Trp with DMAPP to yield N-dimethylallyl-L-tryptophan. DMATS1 exhibits unusually broad substrate specificity and can utilize geranyl diphosphate (GPP) or L-Tyr as an alternative prenyl donor or acceptor, respectively. Is able to catalyze both forward and reverse prenylation, i.e., at C1 or C3 of DMAPP; and it can catalyze C-N and C-O bond-forming reactions. The main product of the cluster is the reverse-N-dimethylallyl-L-tryptophan (r-N-DMAT) produced by the dimethylallyltryptophan synthase DMATS1 and it remains unclear whether this metabolite undergoes further modifications when silent gene clusters are activated. The acetylated form of r-N-DMAT, ac-r-N-DMAT, is also produced. The roles of the cytochrome P450 monooxygenase FFUJ_09176 and the methyltransferase FFUJ_09178 have still to be elucidated. The sequence is that of Dimethylallyltryptophan synthase 1 from Gibberella fujikuroi (strain CBS 195.34 / IMI 58289 / NRRL A-6831) (Bakanae and foot rot disease fungus).